A 271-amino-acid polypeptide reads, in one-letter code: MASLLSLSSTPPSTANSNNYPSSTFKGNINNFRINPFNFAPLKLHLRNIVKKESTRLVVVASASSSNVSPSIGSGSETRFRLDNLGPQPGSRKKGKRKGRGHAAGQGGSCGFGMRGQKSRSGPGIMRGFEGGQMPLYRRIPKLRGIAGGMRAGLPKYVPINLRDIEVAGFKEGEEVSLESLKAKGIINPSGRERRLPLKILGEGELSTKLQIKARAFSGSAKEKLEAAGCSVTVLPGRKKYIKESVRKNLARADEYFAKKRAASASEAESA.

Disordered stretches follow at residues 1–21 (MASL…NNYP) and 66–120 (SNVS…QKSR). The N-terminal 61 residues, 1–61 (MASLLSLSST…KESTRLVVVA (61 aa)), are a transit peptide targeting the chloroplast. The span at 66 to 76 (SNVSPSIGSGS) shows a compositional bias: low complexity. Over residues 91-101 (SRKKGKRKGRG) the composition is skewed to basic residues. A compositionally biased stretch (gly residues) spans 102-114 (HAAGQGGSCGFGM).

In terms of assembly, component of the chloroplast large ribosomal subunit (LSU). Mature 70S chloroplast ribosomes of higher plants consist of a small (30S) and a large (50S) subunit. The 30S small subunit contains 1 molecule of ribosomal RNA (16S rRNA) and 24 different proteins. The 50S large subunit contains 3 rRNA molecules (23S, 5S and 4.5S rRNA) and 33 different proteins.

It localises to the plastid. Its subcellular location is the chloroplast. Functionally, component of the chloroplast ribosome (chloro-ribosome), a dedicated translation machinery responsible for the synthesis of chloroplast genome-encoded proteins, including proteins of the transcription and translation machinery and components of the photosynthetic apparatus. The protein is Large ribosomal subunit protein uL15c (RPL15) of Spinacia oleracea (Spinach).